The following is a 469-amino-acid chain: Adenosylhomocysteinase (469 aa).

Residues T60, D135, and E195 each coordinate substrate. 196–198 (TTT) lines the NAD(+) pocket. The substrate site is built by K225 and D229. Residues N230, 259-264 (GYGDVG), E282, N317, 338-340 (IGH), and N383 contribute to the NAD(+) site.

This sequence belongs to the adenosylhomocysteinase family. Requires NAD(+) as cofactor.

It is found in the cytoplasm. It carries out the reaction S-adenosyl-L-homocysteine + H2O = L-homocysteine + adenosine. The protein operates within amino-acid biosynthesis; L-homocysteine biosynthesis; L-homocysteine from S-adenosyl-L-homocysteine: step 1/1. May play a key role in the regulation of the intracellular concentration of adenosylhomocysteine. The chain is Adenosylhomocysteinase from Hyphomonas neptunium (strain ATCC 15444).